Consider the following 65-residue polypeptide: Large ribosomal subunit protein bL35 (65 aa).

The protein belongs to the bacterial ribosomal protein bL35 family.

In Blochmanniella pennsylvanica (strain BPEN), this protein is Large ribosomal subunit protein bL35.